The sequence spans 129 residues: Small ribosomal subunit protein uS11 (129 aa).

This sequence belongs to the universal ribosomal protein uS11 family. In terms of assembly, part of the 30S ribosomal subunit. Interacts with proteins S7 and S18. Binds to IF-3.

In terms of biological role, located on the platform of the 30S subunit, it bridges several disparate RNA helices of the 16S rRNA. Forms part of the Shine-Dalgarno cleft in the 70S ribosome. This chain is Small ribosomal subunit protein uS11, found in Desulfovibrio desulfuricans (strain ATCC 27774 / DSM 6949 / MB).